A 728-amino-acid chain; its full sequence is Procollagen-lysine,2-oxoglutarate 5-dioxygenase 1 (728 aa).

Positions 1–18 are cleaved as a signal peptide; the sequence is MRSLLLLAPLAWLLLVQA. N-linked (GlcNAc...) asparagine glycosylation is found at N198 and N539. The Fe2OG dioxygenase domain maps to 637–728; sequence QFDLAFVVRY…RYIAVSFVDP (92 aa). The Fe cation site is built by H657 and D659. N687 is a glycosylation site (N-linked (GlcNAc...) asparagine). H709 serves as a coordination point for Fe cation. R719 is an active-site residue.

In terms of assembly, homodimer. Identified in a complex with P3H3 and P3H4. It depends on Fe(2+) as a cofactor. The cofactor is L-ascorbate. As to expression, highly expressed in the liver, heart, lung, skeletal muscle and kidney.

It is found in the rough endoplasmic reticulum membrane. It catalyses the reaction L-lysyl-[collagen] + 2-oxoglutarate + O2 = (5R)-5-hydroxy-L-lysyl-[collagen] + succinate + CO2. Part of a complex composed of PLOD1, P3H3 and P3H4 that catalyzes hydroxylation of lysine residues in collagen alpha chains and is required for normal assembly and cross-linkling of collagen fibrils. Forms hydroxylysine residues in -Xaa-Lys-Gly- sequences in collagens. These hydroxylysines serve as sites of attachment for carbohydrate units and are essential for the stability of the intermolecular collagen cross-links. This is Procollagen-lysine,2-oxoglutarate 5-dioxygenase 1 (Plod1) from Mus musculus (Mouse).